A 1368-amino-acid chain; its full sequence is DNA-directed RNA polymerase subunit beta' (1368 aa).

The disordered stretch occupies residues 1 to 38; the sequence is MTSSSKPARKTSKSKSKASKAAEAPAAPSNELSREAPT. Positions 7–18 are enriched in basic residues; that stretch reads PARKTSKSKSKA. A compositionally biased stretch (low complexity) spans 19–29; it reads SKAAEAPAAPS. Cys-250, Cys-318, Cys-325, and Cys-328 together coordinate Zn(2+). The tract at residues 1340–1368 is disordered; the sequence is AGEELAEEHVPDPGALEGLQEEGLLSQDS. Low complexity predominate over residues 1353–1368; the sequence is GALEGLQEEGLLSQDS.

This sequence belongs to the RNA polymerase beta' chain family. RpoC2 subfamily. In terms of assembly, in cyanobacteria the RNAP catalytic core is composed of 2 alpha, 1 beta, 1 beta', 1 gamma and 1 omega subunit. When a sigma factor is associated with the core the holoenzyme is formed, which can initiate transcription. The cofactor is Zn(2+).

It carries out the reaction RNA(n) + a ribonucleoside 5'-triphosphate = RNA(n+1) + diphosphate. Functionally, DNA-dependent RNA polymerase catalyzes the transcription of DNA into RNA using the four ribonucleoside triphosphates as substrates. The chain is DNA-directed RNA polymerase subunit beta' from Synechococcus sp. (strain RCC307).